Reading from the N-terminus, the 390-residue chain is Na(+)/H(+) antiporter NhaA (390 aa).

11 helical membrane-spanning segments follow: residues 13–33 (FQLE…ALVI), 61–81 (LSVH…FVTL), 99–119 (LLPI…YVFI), 129–149 (GWAI…SLLG), 158–178 (VFLT…IAFF), 181–201 (GDLS…LLTL), 209–229 (FIPY…SGIH), 259–279 (AISP…NAGV), 297–317 (ILLG…FIAV), 330–350 (WLSL…SLFV), and 367–387 (IGVL…LLYA).

It belongs to the NhaA Na(+)/H(+) (TC 2.A.33) antiporter family.

Its subcellular location is the cell inner membrane. The enzyme catalyses Na(+)(in) + 2 H(+)(out) = Na(+)(out) + 2 H(+)(in). Na(+)/H(+) antiporter that extrudes sodium in exchange for external protons. The protein is Na(+)/H(+) antiporter NhaA of Pelagibacter ubique (strain HTCC1062).